Consider the following 491-residue polypeptide: Glutamyl-tRNA(Gln) amidotransferase subunit A (491 aa).

Active-site charge relay system residues include lysine 76 and serine 154. Serine 178 serves as the catalytic Acyl-ester intermediate.

This sequence belongs to the amidase family. GatA subfamily. Heterotrimer of A, B and C subunits.

It carries out the reaction L-glutamyl-tRNA(Gln) + L-glutamine + ATP + H2O = L-glutaminyl-tRNA(Gln) + L-glutamate + ADP + phosphate + H(+). In terms of biological role, allows the formation of correctly charged Gln-tRNA(Gln) through the transamidation of misacylated Glu-tRNA(Gln) in organisms which lack glutaminyl-tRNA synthetase. The reaction takes place in the presence of glutamine and ATP through an activated gamma-phospho-Glu-tRNA(Gln). This chain is Glutamyl-tRNA(Gln) amidotransferase subunit A, found in Cereibacter sphaeroides (strain ATCC 17025 / ATH 2.4.3) (Rhodobacter sphaeroides).